We begin with the raw amino-acid sequence, 308 residues long: ATP synthase gamma chain (308 aa).

This sequence belongs to the ATPase gamma chain family. F-type ATPases have 2 components, CF(1) - the catalytic core - and CF(0) - the membrane proton channel. CF(1) has five subunits: alpha(3), beta(3), gamma(1), delta(1), epsilon(1). CF(0) has three main subunits: a, b and c.

The protein resides in the cell membrane. Its function is as follows. Produces ATP from ADP in the presence of a proton gradient across the membrane. The gamma chain is believed to be important in regulating ATPase activity and the flow of protons through the CF(0) complex. This is ATP synthase gamma chain from Saccharopolyspora erythraea (strain ATCC 11635 / DSM 40517 / JCM 4748 / NBRC 13426 / NCIMB 8594 / NRRL 2338).